A 295-amino-acid chain; its full sequence is Alpha-ketoglutarate-dependent sulfate ester dioxygenase (295 aa).

A substrate-binding site is contributed by His71. Residues His98 and Asp100 each coordinate Fe cation. Val101 provides a ligand contact to substrate. Residue Thr125 coordinates 2-oxoglutarate. His252 provides a ligand contact to Fe cation. 2-oxoglutarate is bound by residues Arg263 and Arg267.

This sequence belongs to the TfdA dioxygenase family. The cofactor is Fe(2+).

It catalyses the reaction a primary linear alkyl sulfate ester + 2-oxoglutarate + O2 = an aldehyde + sulfate + succinate + CO2 + H(+). The enzyme catalyses 2-ethylhexyl sulfate + 2-oxoglutarate + O2 = 2-ethylhexanal + sulfate + succinate + CO2 + H(+). The catalysed reaction is hexyl sulfate + 2-oxoglutarate + O2 = hexanal + sulfate + succinate + CO2 + H(+). It carries out the reaction pentyl sulfate + 2-oxoglutarate + O2 = pentanal + sulfate + succinate + CO2 + H(+). It catalyses the reaction heptyl sulfate + 2-oxoglutarate + O2 = heptanal + sulfate + succinate + CO2 + H(+). Alpha-ketoglutarate-dependent sulfate ester dioxygenase, which oxidizes medium-chain alkyl-sulfate esters. Shows preference for 2-ethylhexyl sulfate (2-EHS) in vitro, leading to the formation of succinate and 2-ethylhexanal. Has likely a role in sulfate scavenging in vivo. Its function is as follows. Also causes the inactivation of the 2-carboxyquinoxaline Ty38c (an antitubercular compound that inhibits DprE1) via oxidative decarboxylation, using Ty38c instead of alpha-ketoglutarate as a substrate. Is thus responsible for primary resistance of M.tuberculosis to Ty38c in vitro. Overexpression of Rv3406 causes resistance to Ty38c. This is Alpha-ketoglutarate-dependent sulfate ester dioxygenase from Mycobacterium tuberculosis (strain ATCC 25618 / H37Rv).